Here is a 133-residue protein sequence, read N- to C-terminus: Interleukin-4 (133 aa).

A signal peptide spans 1 to 24 (MGLTSQLIPMLVCLLACTSNFVHG). 3 cysteine pairs are disulfide-bonded: Cys-27–Cys-133, Cys-48–Cys-85, and Cys-70–Cys-105. 3 N-linked (GlcNAc...) asparagine glycosylation sites follow: Asn-62, Asn-96, and Asn-102.

This sequence belongs to the IL-4/IL-13 family.

It localises to the secreted. Its function is as follows. Participates in at least several B-cell activation processes as well as of other cell types. It is a costimulator of DNA-synthesis. It induces the expression of class II MHC molecules on resting B-cells. It enhances both secretion and cell surface expression of IgE and IgG1. It also regulates the expression of the low affinity Fc receptor for IgE (CD23) on both lymphocytes and monocytes. Positively regulates IL31RA expression in macrophages. Stimulates autophagy in dendritic cells by interfering with mTORC1 signaling and through the induction of RUFY4. The protein is Interleukin-4 (IL4) of Tursiops truncatus (Atlantic bottle-nosed dolphin).